We begin with the raw amino-acid sequence, 342 residues long: N-acetyl-gamma-glutamyl-phosphate reductase (342 aa).

Residue Cys-146 is part of the active site.

The protein belongs to the NAGSA dehydrogenase family. Type 1 subfamily.

It is found in the cytoplasm. It carries out the reaction N-acetyl-L-glutamate 5-semialdehyde + phosphate + NADP(+) = N-acetyl-L-glutamyl 5-phosphate + NADPH + H(+). Its pathway is amino-acid biosynthesis; L-arginine biosynthesis; N(2)-acetyl-L-ornithine from L-glutamate: step 3/4. In terms of biological role, catalyzes the NADPH-dependent reduction of N-acetyl-5-glutamyl phosphate to yield N-acetyl-L-glutamate 5-semialdehyde. The chain is N-acetyl-gamma-glutamyl-phosphate reductase from Saccharopolyspora erythraea (strain ATCC 11635 / DSM 40517 / JCM 4748 / NBRC 13426 / NCIMB 8594 / NRRL 2338).